Reading from the N-terminus, the 177-residue chain is MGTCPCESSERNEPVSRVSGTNEVSDGNETNNPAEVSDGNETNNPAEVSDGNETNNPAPVSRVSGTNEVSDGNETNNPAPVSRVSGTNEVSDGNETNNPAPVTEKPLHPHEPHIEILRGQPTDQELAALIAVLGSISGSTPPAQPEPTRWGLPVDQLRYPVFSWQRITLQEMTHMRR.

Positions 1–112 are disordered; sequence MGTCPCESSE…TEKPLHPHEP (112 aa). Over residues 18–100 the composition is skewed to polar residues; the sequence is VSGTNEVSDG…SDGNETNNPA (83 aa).

Interacts with the AccA3/AccD5 biotin-dependent acyl-CoA carboxylase complex. Interacts with the AccA3/AccD6 complex. Is also part of the long-chain acyl-CoA carboxylase (LCC) complex, which is composed of AccA3, AccD4, AccD5 and AccE5. The four subunits are essential for activity, but AccD5, together with AccE5, probably plays a structural role rather than a catalytic one.

Its function is as follows. Stimulates activity of the AccA3/AccD5 biotin-dependent acyl-CoA carboxylase complex. Interacts with AccD5 and modulates its carboxylase activity for acetyl-CoA and propionyl-CoA. Inhibits activity of the AccA3/AccD6 complex. Is also required for the activity of the long-chain acyl-CoA carboxylase (LCC) complex. This chain is Biotin-dependent acetyl-/propionyl-coenzyme A carboxylase epsilon subunit, found in Mycobacterium tuberculosis (strain ATCC 25618 / H37Rv).